The primary structure comprises 327 residues: Sphingomyelinase D (327 aa).

The first 23 residues, 1-23 (MQPLTRTICALFCLLLTLPLTFG), serve as a signal peptide directing secretion. Residue His-52 is part of the active site. Mg(2+)-binding residues include Glu-72, Asp-74, and Asp-117. Positions 320–327 (VTGADKLW) match the SMD-tail motif.

The protein belongs to the sphingomyelinase D/phospholipase D family. Requires Mg(2+) as cofactor.

The protein localises to the secreted. The catalysed reaction is a sphingomyelin + H2O = an N-acylsphing-4-enine 1-phosphate + choline + H(+). In terms of biological role, catalyzes the hydrolysis of sphingomyelin. Sphingomyelinases D are produced by some spider in their venoms, but also by arthropods such as ticks, or pathogenic bacteria and fungi. They might play a role in pathogenicity through different mechanisms, such as membrane destabilization and host cell penetration, but also pulmonary inflammation and cutaneous lesions. This Paracoccidioides brasiliensis (strain Pb03) protein is Sphingomyelinase D.